Here is a 380-residue protein sequence, read N- to C-terminus: Cytochrome b (380 aa).

The next 4 helical transmembrane spans lie at 34–54, 78–99, 114–134, and 179–199; these read FGSLLALCLATQILTGLLLAM, WLIRNMHANGASFFFICVYLHI, WNTGVLLLLTLMATAFVGYVL, and FFALHFLLPFLIAGLTLIHLT. H84 and H98 together coordinate heme b. Positions 183 and 197 each coordinate heme b. H202 is a binding site for a ubiquinone. A run of 4 helical transmembrane segments spans residues 227 to 247, 289 to 309, 321 to 341, and 348 to 368; these read LKDILGLMLLLLPLTTLALFS, LGGVLALAASVLVLFLSPLLH, LSQLLFWTLVANLLILTWIGS, and FIIIGQLASTTYFTILLVLFP.

The protein belongs to the cytochrome b family. The cytochrome bc1 complex contains 11 subunits: 3 respiratory subunits (MT-CYB, CYC1 and UQCRFS1), 2 core proteins (UQCRC1 and UQCRC2) and 6 low-molecular weight proteins (UQCRH/QCR6, UQCRB/QCR7, UQCRQ/QCR8, UQCR10/QCR9, UQCR11/QCR10 and a cleavage product of UQCRFS1). This cytochrome bc1 complex then forms a dimer. The cofactor is heme b.

The protein localises to the mitochondrion inner membrane. Component of the ubiquinol-cytochrome c reductase complex (complex III or cytochrome b-c1 complex) that is part of the mitochondrial respiratory chain. The b-c1 complex mediates electron transfer from ubiquinol to cytochrome c. Contributes to the generation of a proton gradient across the mitochondrial membrane that is then used for ATP synthesis. The sequence is that of Cytochrome b (MT-CYB) from Oceanodroma melania (Black storm-petrel).